Reading from the N-terminus, the 132-residue chain is uncharacterized protein (132 aa).

The N-terminal stretch at 1 to 19 (MKKALFLVGLVFTAGVISS) is a signal peptide. C20 is lipidated: N-palmitoyl cysteine. C20 is lipidated: S-diacylglycerol cysteine.

Its subcellular location is the cell membrane. This is an uncharacterized protein from Aquifex aeolicus (strain VF5).